The following is a 121-amino-acid chain: Small ribosomal subunit protein uS13 (121 aa).

The segment at 96–121 is disordered; it reads PVRGQNTKNNARTRKGKAVAIAGKKK. The span at 106-121 shows a compositional bias: basic residues; it reads ARTRKGKAVAIAGKKK.

Belongs to the universal ribosomal protein uS13 family. In terms of assembly, part of the 30S ribosomal subunit. Forms a loose heterodimer with protein S19. Forms two bridges to the 50S subunit in the 70S ribosome.

Functionally, located at the top of the head of the 30S subunit, it contacts several helices of the 16S rRNA. In the 70S ribosome it contacts the 23S rRNA (bridge B1a) and protein L5 of the 50S subunit (bridge B1b), connecting the 2 subunits; these bridges are implicated in subunit movement. Contacts the tRNAs in the A and P-sites. This Streptococcus gordonii (strain Challis / ATCC 35105 / BCRC 15272 / CH1 / DL1 / V288) protein is Small ribosomal subunit protein uS13.